The chain runs to 224 residues: Synaptogyrin-2 (224 aa).

N-acetylmethionine is present on Met-1. Phosphoserine is present on Ser-3. One can recognise an MARVEL domain in the interval 20 to 171 (FLKQPQVVVR…LAFLAYQRYK (152 aa)). The next 4 membrane-spanning stretches (helical) occupy residues 26–46 (VVVR…IFGE), 73–93 (AIGV…IYFP), 105–125 (VIGD…GFCF), and 147–167 (AAIT…FLAY). Residues 196-224 (PGVPADTYQQPPFTQNAESTEGYQPPPVY) are disordered. Residues 202 to 217 (TYQQPPFTQNAESTEG) show a composition bias toward polar residues.

Belongs to the synaptogyrin family. Post-translationally, may be tyrosine phosphorylated by Src.

It localises to the cytoplasmic vesicle membrane. Its subcellular location is the cytoplasmic vesicle. The protein localises to the secretory vesicle. The protein resides in the synaptic vesicle membrane. May play a role in regulated exocytosis. In neuronal cells, modulates the localization of synaptophysin/SYP into synaptic-like microvesicles and may therefore play a role in the formation and/or the maturation of this vesicles. May also play a role in GLUT4 storage and transport to the plasma membrane. This Bos taurus (Bovine) protein is Synaptogyrin-2.